The chain runs to 511 residues: Maturase K (511 aa).

This sequence belongs to the intron maturase 2 family. MatK subfamily.

The protein localises to the plastid. The protein resides in the chloroplast. Usually encoded in the trnK tRNA gene intron. Probably assists in splicing its own and other chloroplast group II introns. The chain is Maturase K from Hordeum vulgare subsp. spontaneum (Wild barley).